The following is a 448-amino-acid chain: UDP-glucose 6-dehydrogenase (448 aa).

NAD(+) is bound by residues 2 to 19, Val11, Asp30, Lys35, Thr121, and Glu152; that span reads NITF…GIIM. Substrate-binding positions include 148–152, Lys204, Asn208, 249–253, and Gly257; these read EFLRE and FLNAG. Cys260 functions as the Nucleophile in the catalytic mechanism. Residue Lys263 coordinates NAD(+). Lys321 lines the substrate pocket. Arg328 lines the NAD(+) pocket.

The protein belongs to the UDP-glucose/GDP-mannose dehydrogenase family.

It carries out the reaction UDP-alpha-D-glucose + 2 NAD(+) + H2O = UDP-alpha-D-glucuronate + 2 NADH + 3 H(+). It participates in nucleotide-sugar biosynthesis; UDP-alpha-D-glucuronate biosynthesis; UDP-alpha-D-glucuronate from UDP-alpha-D-glucose: step 1/1. The chain is UDP-glucose 6-dehydrogenase (udg) from Rickettsia felis (strain ATCC VR-1525 / URRWXCal2) (Rickettsia azadi).